A 515-amino-acid polypeptide reads, in one-letter code: Cytochrome P450 monooxygenase janP (515 aa).

The helical transmembrane segment at 20 to 36 threads the bilayer; the sequence is GFLWKYAAFMVFIYLLL. Cys-456 serves as a coordination point for heme. An N-linked (GlcNAc...) asparagine glycan is attached at Asn-501.

It belongs to the cytochrome P450 family. Requires heme as cofactor.

It localises to the membrane. It participates in secondary metabolite biosynthesis. Cytochrome P450 monooxygenase; part of the gene cluster that mediates the biosynthesis of the indole diterpenes janthitremanes such as shearinine K or shearinine A. The geranylgeranyl diphosphate (GGPP) synthase janG catalyzes the first step in janthitremane biosynthesis via conversion of farnesyl pyrophosphate and isopentyl pyrophosphate into geranylgeranyl pyrophosphate (GGPP). Condensation of indole-3-glycerol phosphate with GGPP by the prenyl transferase janC then forms 3-geranylgeranylindole (3-GGI). Epoxidation by the FAD-dependent monooxygenase janM leads to a epoxidized-GGI that is substrate of the terpene cyclase janB for cyclization to yield paspaline. Paspaline is subsequently converted to 13-desoxypaspaline by the cytochrome P450 monooxygenase janP, via beta-PC-M6 in a series of alpha-face oxidations. The cytochrome P450 monooxygenase janQ is proposed to carry out sequential beta-face oxidation steps at C-7 and C-13 of 13-desoxypaspaline to form paspalicine and paspalinine respectively. The indole diterpene prenyltransferase janD may then convert paspalinine into shearinine K which is substrate of janO and/or additional enzymes for oxidation and cyclization to generate shearinine A. This Penicillium janthinellum (Penicillium vitale) protein is Cytochrome P450 monooxygenase janP.